We begin with the raw amino-acid sequence, 305 residues long: E3 ubiquitin-protein ligase RNF115 (305 aa).

A2 carries the N-acetylalanine modification. The segment covering 100-110 (NRANERGHQTH) has biased composition (basic and acidic residues). Residues 100-139 (NRANERGHQTHTDFWGPSRPPRLPMTRRYRSRGSTRPDRS) are disordered. A Phosphoserine modification is found at S133. Residues 229–270 (CPVCKEDYTVEEKVRQLPCNHFFHSSCIVPWLELHDTCPVCR) form an RING-type zinc finger. The segment at 274–305 (NGEDSTRQTQSSEASASNRFSNDSQLHDRWTF) is disordered. Residues 280-297 (RQTQSSEASASNRFSNDS) show a composition bias toward polar residues.

As to quaternary structure, interacts with RAB7A. Interacts with EGFR and FLT3. Interacts with BST2. Interacts with STX17. Interacts with YWHAE. In terms of processing, phosphorylated by AKT1, allowing association with the 14-3-3 chaperones that facilitates associating with TLRs. Deubiquitinated by USP9X; antogonizing its autoubiquitination and subsequent proteasomal degradation. Post-translationally, RING-type zinc finger-dependent and E2-dependent autoubiquitination.

It localises to the cytoplasm. It is found in the cytoplasmic vesicle. The protein resides in the phagosome. Its subcellular location is the nucleus. The protein localises to the endoplasmic reticulum. It localises to the golgi apparatus. The enzyme catalyses S-ubiquitinyl-[E2 ubiquitin-conjugating enzyme]-L-cysteine + [acceptor protein]-L-lysine = [E2 ubiquitin-conjugating enzyme]-L-cysteine + N(6)-ubiquitinyl-[acceptor protein]-L-lysine.. Its pathway is protein modification; protein ubiquitination. Its function is as follows. E3 ubiquitin-protein ligase that catalyzes the 'Lys-48'- and/or 'Lys-63'-linked polyubiquitination of various substrates and thereby plays a role in a number of signaling pathways including autophagy, innate immunity, cell proliferation and cell death. Plays a role in the endosomal trafficking and degradation of membrane receptors including EGFR, FLT3, MET and CXCR4 through their polyubiquitination. Participates together with BST2 in antiviral immunity by facilitating the internalization of HIV-1 virions into intracellular vesicles leading to their lysosomal degradation. Also possesses an antiviral activity independently of BST2 by promoting retroviral GAG proteins ubiquitination, redistribution to endo-lysosomal compartments and, ultimately, lysosomal degradation. Catalyzes distinct types of ubiquitination on MAVS and STING1 at different phases of viral infection to promote innate antiviral response. Mediates the 'Lys-48'-linked ubiquitination of MAVS leading to its proteasomal degradation and ubiquitinates STING1 via 'Lys-63'-linked polyubiquitination, critical for its oligomerization and the subsequent recruitment of TBK1. Plays a positive role in the autophagosome-lysosome fusion by interacting with STX17 and enhancing its stability without affecting 'Lys-48'- or 'Lys-63'-linked polyubiquitination levels, which in turn promotes autophagosome maturation. Negatively regulates TLR-induced expression of proinflammatory cytokines by catalyzing 'Lys-11'-linked ubiquitination of RAB1A and RAB13 to inhibit post-ER trafficking of TLRs to the Golgi by RAB1A and subsequently from the Golgi apparatus to the cell surface by RAB13. This Mus musculus (Mouse) protein is E3 ubiquitin-protein ligase RNF115.